The chain runs to 416 residues: Muscle-specific homeobox protein tinman (416 aa).

Composition is skewed to polar residues over residues 1-11 (MLQHHQQQAQS) and 18-33 (YTQSPSPGSLTNADAL). Disordered regions lie at residues 1 to 33 (MLQHHQQQAQSGGYYDHYTQSPSPGSLTNADAL), 246 to 305 (TASN…RKPR), and 391 to 416 (VMWPPTMQQSQQQQQHHAQQQQMQHM). A compositionally biased stretch (low complexity) spans 281 to 295 (NSISGNSNPGSNSGS). The homeobox DNA-binding region spans 301 to 360 (KRKPRVLFSQAQVLELECRFRLKKYLTGAEREIIAQKLNLSATQVKIWFQNRRYKSKRGD). Low complexity predominate over residues 397 to 416 (MQQSQQQQQHHAQQQQMQHM).

The protein resides in the nucleus. Functionally, required for the development of heart and visceral muscle; for the formation of somatic muscles. Has a crucial function in the early mesodermal subdivisions. The polypeptide is Muscle-specific homeobox protein tinman (tin) (Drosophila melanogaster (Fruit fly)).